The sequence spans 447 residues: Polyamine export protein (447 aa).

Over 1-4 (MLNS) the chain is Cytoplasmic. The CNNM transmembrane domain maps to 1-197 (MLNSIFIIFC…ALAGVLRKQE (197 aa)). A helical transmembrane segment spans residues 5-25 (IFIIFCLIAVSAFFSISEISL). Topologically, residues 26-54 (AASRKIKLKLLADEGSINAQRVLKMQENP) are periplasmic. Residues 55–75 (GMFFTVVQIGLNAVAILGGIV) form a helical membrane-spanning segment. At 76 to 99 (GDAAFSPAFSALFSHYMSPELSEQ) the chain is on the cytoplasmic side. Residues 100–120 (LSFILSFSLVTGLFILFADLT) form a helical membrane-spanning segment. At 121–141 (PKRIGMIAPEAVALRIINPMR) the chain is on the periplasmic side. The chain crosses the membrane as a helical span at residues 142-162 (FCLFVFRPLVWLFNGMANNIF). At 163–447 (RLFKIPMVRK…DAQGKEDSAA (285 aa)) the chain is on the cytoplasmic side. 2 CBS domains span residues 216–275 (MTSR…NQSM) and 282–343 (QIRN…GLEE).

It belongs to the UPF0053 family. PaeA subfamily.

The protein localises to the cell inner membrane. Involved in cadaverine and putrescine tolerance in stationary phase. May facilitate the efflux of both cadaverine and putrescine from the cytoplasm, reducing potentially toxic levels under certain stress conditions. This Salmonella typhimurium (strain 14028s / SGSC 2262) protein is Polyamine export protein.